Here is a 249-residue protein sequence, read N- to C-terminus: Protein twisted gastrulation (249 aa).

The first 23 residues, 1 to 23 (MQLLCYFVILFVGIAPWSSLAND), serve as a signal peptide directing secretion. N-linked (GlcNAc...) asparagine glycosylation occurs at asparagine 199.

The protein belongs to the twisted gastrulation protein family. In terms of assembly, component of a complex composed of dpp, sog and tsg. In terms of tissue distribution, first appears in stage 4 embryos, expressed in two domains: a broad mid-dorsal saddle and an anterior cap, expression between the domains is continuous across the dorsal midline. At stage 5, expression is refined into 4 graded stripes in the mid-dorsal region and a paired domain in the anterior region. During stages 7 and 8, anterior expression fades and the mid dorsal stripes are located between the anterior and posterior transverse furrow (ATF and PTF). Expressing cells become incorporated into the deepening PTF.

Its subcellular location is the secreted. Functionally, involved in dorsal-ventral patterning. Required for specification of a narrow strip of dorsal midline cells that will give rise to the amnioserosa, but not for specification of dorsal ectoderm cells. Inhibits BMP signaling; enhances the binding of sog to dpp, thus enhancing the antagonistic activity of sog. This Drosophila melanogaster (Fruit fly) protein is Protein twisted gastrulation (tsg).